Consider the following 253-residue polypeptide: 5'/3'-nucleotidase SurE (253 aa).

Residues Asp8, Asp9, Ser39, and Asn92 each contribute to the a divalent metal cation site.

This sequence belongs to the SurE nucleotidase family. Requires a divalent metal cation as cofactor.

The protein resides in the cytoplasm. It catalyses the reaction a ribonucleoside 5'-phosphate + H2O = a ribonucleoside + phosphate. The enzyme catalyses a ribonucleoside 3'-phosphate + H2O = a ribonucleoside + phosphate. The catalysed reaction is [phosphate](n) + H2O = [phosphate](n-1) + phosphate + H(+). Functionally, nucleotidase with a broad substrate specificity as it can dephosphorylate various ribo- and deoxyribonucleoside 5'-monophosphates and ribonucleoside 3'-monophosphates with highest affinity to 3'-AMP. Also hydrolyzes polyphosphate (exopolyphosphatase activity) with the preference for short-chain-length substrates (P20-25). Might be involved in the regulation of dNTP and NTP pools, and in the turnover of 3'-mononucleotides produced by numerous intracellular RNases (T1, T2, and F) during the degradation of various RNAs. The protein is 5'/3'-nucleotidase SurE of Escherichia coli O127:H6 (strain E2348/69 / EPEC).